A 293-amino-acid polypeptide reads, in one-letter code: Epimerase family protein SDR39U1 (293 aa).

Residues 31 to 32 (SR), 58 to 59 (LA), E77, R82, and V160 each bind NADP(+).

It belongs to the NAD(P)-dependent epimerase/dehydratase family. SDR39U1 subfamily. Expressed in adrenal gland.

In terms of biological role, putative NADP-dependent oxidoreductase. The polypeptide is Epimerase family protein SDR39U1 (SDR39U1) (Homo sapiens (Human)).